Reading from the N-terminus, the 385-residue chain is 8-amino-7-oxononanoate synthase (385 aa).

Arg-21 is a substrate binding site. Pyridoxal 5'-phosphate is bound at residue 108–109 (GF). His-133 provides a ligand contact to substrate. Residues Ser-179, His-207, and Thr-233 each coordinate pyridoxal 5'-phosphate. Lys-236 bears the N6-(pyridoxal phosphate)lysine mark. Residue Thr-352 coordinates substrate.

It belongs to the class-II pyridoxal-phosphate-dependent aminotransferase family. BioF subfamily. As to quaternary structure, homodimer. Pyridoxal 5'-phosphate serves as cofactor.

The catalysed reaction is 6-carboxyhexanoyl-[ACP] + L-alanine + H(+) = (8S)-8-amino-7-oxononanoate + holo-[ACP] + CO2. The protein operates within cofactor biosynthesis; biotin biosynthesis. Functionally, catalyzes the decarboxylative condensation of pimeloyl-[acyl-carrier protein] and L-alanine to produce 8-amino-7-oxononanoate (AON), [acyl-carrier protein], and carbon dioxide. This is 8-amino-7-oxononanoate synthase from Klebsiella pneumoniae (strain 342).